Consider the following 542-residue polypeptide: POTE ankyrin domain family member C (542 aa).

ANK repeat units follow at residues 138–171 (EDLD…KRDK), 172–201 (QKRT…QLNV), 205–234 (KKRT…DQNI), 238–267 (YGNT…DIES), 271–300 (CGLT…NLNA), 304–333 (YGRT…DVSS), and 337–373 (SGQT…SENS). The disordered stretch occupies residues 369–494 (SSENSNPEQD…NTGISQDEIL (126 aa)). Basic and acidic residues-rich tracts occupy residues 377 to 392 (QDLK…RLKV), 401 to 412 (MSQEPEINKDCD), and 466 to 481 (EEYH…KQLS). Positions 482–494 (EEQNTGISQDEIL) are enriched in polar residues. Residues 489 to 538 (SQDEILTNKQKQIEVAEKKMNSELSLSHKKEEDLLRENSMLQEEIAMLIS) are a coiled coil.

The protein belongs to the POTE family. Expressed in prostate and testis.

This Homo sapiens (Human) protein is POTE ankyrin domain family member C (POTEC).